Here is a 492-residue protein sequence, read N- to C-terminus: Diacylglycerol kinase 7 (492 aa).

The DAGKc domain occupies 90-248 (APHAPMVVFI…SWKIVVSMPS (159 aa)).

This sequence belongs to the eukaryotic diacylglycerol kinase family. As to quaternary structure, monomer. In terms of tissue distribution, highly expressed in flowers, and at low levels in roots, stems and leaves.

It catalyses the reaction a 1,2-diacyl-sn-glycerol + ATP = a 1,2-diacyl-sn-glycero-3-phosphate + ADP + H(+). Phosphorylates the second messenger diacylglycerol (DAG) to generate phosphatidic acid (PA), another important signaling molecule. PA is required for plant development and responses to abiotic stress and pathogen attack. May be involved in the accumulation of PA during cold stress xhibits high specificity for 1,2-dioleoyl-sn-glycerol (1,2-DOG), 1-palmitoyl, 2-oleoyl-sn-glycerol (1,2 POG), 1-stearoyl, 2-linoleoyl-sn-glycerol (1,2-SLG) and 1-oleoyl, 2-palmitoyl-sn-glycerol (1,2-OPG). This is Diacylglycerol kinase 7 (DGK7) from Arabidopsis thaliana (Mouse-ear cress).